The sequence spans 172 residues: Protein GrpE (172 aa).

Residues 1 to 23 form a disordered region; the sequence is MNQDHPECDSEELTQNSPETDPL.

The protein belongs to the GrpE family. Homodimer.

It localises to the cytoplasm. Participates actively in the response to hyperosmotic and heat shock by preventing the aggregation of stress-denatured proteins, in association with DnaK and GrpE. It is the nucleotide exchange factor for DnaK and may function as a thermosensor. Unfolded proteins bind initially to DnaJ; upon interaction with the DnaJ-bound protein, DnaK hydrolyzes its bound ATP, resulting in the formation of a stable complex. GrpE releases ADP from DnaK; ATP binding to DnaK triggers the release of the substrate protein, thus completing the reaction cycle. Several rounds of ATP-dependent interactions between DnaJ, DnaK and GrpE are required for fully efficient folding. The chain is Protein GrpE from Xylella fastidiosa (strain 9a5c).